The primary structure comprises 576 residues: Arginine--tRNA ligase (576 aa).

The 'HIGH' region signature appears at 126-136; that stretch reads ANPTGPMHIGH.

It belongs to the class-I aminoacyl-tRNA synthetase family. Monomer.

Its subcellular location is the cytoplasm. The enzyme catalyses tRNA(Arg) + L-arginine + ATP = L-arginyl-tRNA(Arg) + AMP + diphosphate. This is Arginine--tRNA ligase from Rickettsia typhi (strain ATCC VR-144 / Wilmington).